We begin with the raw amino-acid sequence, 304 residues long: Phosphonates import ATP-binding protein PhnC 1 (304 aa).

The 237-residue stretch at 4–240 (VSLQNVTKLF…VIDDLYYAGS (237 aa)) folds into the ABC transporter domain. An ATP-binding site is contributed by 37-44 (GPSGAGKS). Positions 240–304 (SESTPVSHGD…TETDTGEAQL (65 aa)) are disordered. Residues 263-272 (TSVSSDMETT) are compositionally biased toward polar residues. Acidic residues predominate over residues 289 to 304 (TDTETDTETDTGEAQL).

This sequence belongs to the ABC transporter superfamily. Phosphonates importer (TC 3.A.1.9.1) family. As to quaternary structure, the complex is composed of two ATP-binding proteins (PhnC), two transmembrane proteins (PhnE) and a solute-binding protein (PhnD).

It localises to the cell membrane. The enzyme catalyses phosphonate(out) + ATP + H2O = phosphonate(in) + ADP + phosphate + H(+). In terms of biological role, part of the ABC transporter complex PhnCDE involved in phosphonates import. Responsible for energy coupling to the transport system. The polypeptide is Phosphonates import ATP-binding protein PhnC 1 (Haloquadratum walsbyi (strain DSM 16790 / HBSQ001)).